Consider the following 398-residue polypeptide: Probable elongation factor 1-gamma (398 aa).

The GST C-terminal domain maps to 66 to 199 (GTSANAETVQ…SVAQFNQAKF (134 aa)). The interval 210 to 248 (APKAEKPKKEAKPAAAAAQPEDDEPKEEKSKDPFQDMPK) is disordered. Residues 211-221 (PKAEKPKKEAK) are compositionally biased toward basic and acidic residues. Residues 239-398 (SKDPFQDMPK…KKFNQGKIFK (160 aa)) enclose the EF-1-gamma C-terminal domain.

As to quaternary structure, EF-1 is composed of four subunits: alpha, beta, delta, and gamma. Post-translationally, AMPylated by fic-1.

Probably plays a role in anchoring the complex to other cellular components. The polypeptide is Probable elongation factor 1-gamma (Caenorhabditis elegans).